Here is a 402-residue protein sequence, read N- to C-terminus: Nicotinate phosphoribosyltransferase (402 aa).

His226 bears the Phosphohistidine; by autocatalysis mark.

It belongs to the NAPRTase family. Post-translationally, transiently phosphorylated on a His residue during the reaction cycle. Phosphorylation strongly increases the affinity for substrates and increases the rate of nicotinate D-ribonucleotide production. Dephosphorylation regenerates the low-affinity form of the enzyme, leading to product release.

The enzyme catalyses nicotinate + 5-phospho-alpha-D-ribose 1-diphosphate + ATP + H2O = nicotinate beta-D-ribonucleotide + ADP + phosphate + diphosphate. It functions in the pathway cofactor biosynthesis; NAD(+) biosynthesis; nicotinate D-ribonucleotide from nicotinate: step 1/1. Functionally, catalyzes the synthesis of beta-nicotinate D-ribonucleotide from nicotinate and 5-phospho-D-ribose 1-phosphate at the expense of ATP. This Chromobacterium violaceum (strain ATCC 12472 / DSM 30191 / JCM 1249 / CCUG 213 / NBRC 12614 / NCIMB 9131 / NCTC 9757 / MK) protein is Nicotinate phosphoribosyltransferase.